The primary structure comprises 148 residues: Snaclec jerdonuxin subunit beta (148 aa).

The N-terminal stretch at 1-23 (MVRFIFVSFGLLVVFLSLSGIGA) is a signal peptide. Disulfide bonds link C27–C38, C55–C144, and C121–C136. The C-type lectin domain occupies 34 to 145 (YDEHCYQVFQ…CSSKRYIVCK (112 aa)).

Belongs to the snaclec family. As to quaternary structure, tetramer of 4 heterodimers of alpha and beta subunits; disulfide-linked. Expressed by the venom gland.

Its subcellular location is the secreted. Snaclec that strongly induces platelet aggregation, in a dose-dependent manner. The polypeptide is Snaclec jerdonuxin subunit beta (Protobothrops jerdonii (Jerdon's pitviper)).